The chain runs to 3414 residues: Genome polyprotein (3414 aa).

Positions 1 to 30 are disordered; the sequence is MVKKAILKGKGGGPPRRVSKETATKTRQPR. Residues 2-98 lie on the Cytoplasmic side of the membrane; that stretch reads VKKAILKGKG…LQKRGKRRSA (97 aa). The propeptide at 97–117 is ER anchor for the capsid protein C, removed in mature form by serine protease NS3; the sequence is SATDWMSWLLVITLLGMTLAA. A helical membrane pass occupies residues 99–119; that stretch reads TDWMSWLLVITLLGMTLAATV. Over 120 to 242 the chain is Extracellular; sequence RKERDGSTVI…HLTRVEGWVW (123 aa). Asn-144 carries N-linked (GlcNAc...) asparagine; by host glycosylation. The helical transmembrane segment at 243–260 threads the bilayer; the sequence is KNKLLALAMVTVVWLTLE. Ser-261 is a topological domain (cytoplasmic). The helical transmembrane segment at 262 to 280 threads the bilayer; it reads VVTRVAVLVVLLCLAPVYA. Over 281 to 727 the chain is Extracellular; the sequence is SRCTHLENRD…HTVLGGAFNS (447 aa). Cystine bridges form between Cys-283/Cys-310, Cys-340/Cys-396, Cys-340/Cys-401, Cys-354/Cys-385, Cys-372/Cys-396, and Cys-372/Cys-401. Residues 378 to 391 form a fusion peptide region; sequence DRGWGNHCGLFGKG. N-linked (GlcNAc...) asparagine; by host glycosylation is present at Asn-434. Cystine bridges form between Cys-466/Cys-570 and Cys-587/Cys-618. A helical transmembrane segment spans residues 728 to 748; that stretch reads IFGGVGFLPKLLLGVALAWLG. Over 749–755 the chain is Extracellular; it reads LNMRNPT. A helical membrane pass occupies residues 756-776; sequence MSMSFLLAGGLVLAMTLGVGA. The Extracellular portion of the chain corresponds to 777-1132; the sequence is DVGCAVDTER…RSMVVADNGE (356 aa). 6 cysteine pairs are disulfide-bonded: Cys-780/Cys-791, Cys-831/Cys-920, Cys-955/Cys-1000, Cys-1057/Cys-1106, Cys-1068/Cys-1090, and Cys-1089/Cys-1093. N-linked (GlcNAc...) asparagine; by host glycosylation is found at Asn-861, Asn-983, and Asn-999. The chain crosses the membrane as a helical span at residues 1133–1153; that stretch reads LLSEGGVPGIVALFVVLEYII. Over 1154-1158 the chain is Cytoplasmic; it reads RRRPS. The chain crosses the membrane as a helical span at residues 1159–1179; the sequence is TGTTVVWGGIVVLALLVTGMV. The Lumenal portion of the chain corresponds to 1180–1187; the sequence is RIESLVRY. Residues 1188-1208 traverse the membrane as a helical segment; it reads VVAVGITFHLELGPEIVALML. Residues 1209–1293 are Cytoplasmic-facing; sequence LQAVFELRVG…LLMALMTQQD (85 aa). A helical membrane pass occupies residues 1294 to 1314; that stretch reads VVTVHHGLVCFLSVASACSVW. The Lumenal portion of the chain corresponds to 1315–1327; the sequence is RLLKGHREQKGLT. A helical transmembrane segment spans residues 1328-1348; sequence WVVPLAGLLGGEGSGIRLLAF. Residues 1349-1359 are Cytoplasmic-facing; it reads WELSAHRGRRS. The helical transmembrane segment at 1360–1378 threads the bilayer; that stretch reads FSEPLTVVGVMLTLASGMM. Residues 1379–1382 are Lumenal-facing; it reads RHTS. Residues 1383–1403 form a helical membrane-spanning segment; it reads QEALCALAVASFLLLMLVLGT. Residues 1404 to 1454 are Cytoplasmic-facing; sequence RKMQLVAEWSGCVEWYPELVNEGGEVSLRVRQDAMGNFHLTELEKEERMMA. The segment at 1410–1449 is interacts with and activates NS3 protease; sequence AEWSGCVEWYPELVNEGGEVSLRVRQDAMGNFHLTELEKE. Positions 1455-1475 form an intramembrane region, helical; that stretch reads FWLIAGLAASAIHWSGILGVM. The Cytoplasmic portion of the chain corresponds to 1476-2160; sequence GLWTLTEMLR…RMAERDAPEA (685 aa). Residues 1490-1669 enclose the Peptidase S7 domain; sequence SDLVFSGQGG…EAEKSRPNLP (180 aa). Residues His-1543, Asp-1567, and Ser-1627 each act as charge relay system; for serine protease NS3 activity in the active site. A Helicase ATP-binding domain is found at 1675–1831; the sequence is TGWTSKGQIT…ESNGAITSEE (157 aa). 1688–1695 provides a ligand contact to ATP; sequence MHPGSGKT. The DEAH box signature appears at 1779–1782; that stretch reads DEAH. Residues 1841-2000 enclose the Helicase C-terminal domain; it reads DGFDWITEYE…TLRGPVATFY (160 aa). The residue at position 1883 (Lys-1883) is an N6-acetyllysine; by host. A helical transmembrane segment spans residues 2161 to 2181; sequence FLTMVEMMVLGLATLGVIWCF. Topologically, residues 2182-2189 are lumenal; the sequence is VVRTSISR. The helical intramembrane region spans 2190–2210; sequence MMLGTLVLLASLLLLWAGGVG. A topological domain (lumenal) is located at residue Tyr-2211. A helical transmembrane segment spans residues 2212–2232; the sequence is GNMAGVALIFYTLLTVLQPEA. The Cytoplasmic segment spans residues 2233-2244; it reads GKQRSSDDNKLA. A helical membrane pass occupies residues 2245 to 2265; it reads YFLLTLCSLAGLVAANEMGFL. The Lumenal portion of the chain corresponds to 2266–2299; sequence EKTKADLSTALWSEREEPRPWSEWTNVDIQPARS. Residues 2300–2320 constitute an intramembrane region (helical); the sequence is WGTYVLVVSLFTPYIIHQLQT. At 2321 to 2343 the chain is on the lumenal side; sequence KIQQLVNSAVASGAQAMRDLGGG. Positions 2344–2364 form an intramembrane region, helical; sequence APFFGVAGHVMTLGVVSLIGA. The Lumenal portion of the chain corresponds to 2365–2368; it reads TPTS. A helical membrane pass occupies residues 2369–2389; that stretch reads LMVGVGLAALHLAIVVSGLEA. Topologically, residues 2390 to 2432 are cytoplasmic; sequence ELTQRAHKVFFSAMVRNPMVDGDVINPFGEGEAKPALYERKMS. The helical transmembrane segment at 2433-2453 threads the bilayer; that stretch reads LVLATVLCLMSVVMNRTVASI. The Lumenal segment spans residues 2454 to 2477; that stretch reads TEASAVGLAAAGQLLRPEADTLWT. The chain crosses the membrane as a helical span at residues 2478–2498; sequence MPVACGMSGVVRGSLWGFLPL. The Cytoplasmic segment spans residues 2499 to 3414; that stretch reads GHRLWLRASG…WELRLESSII (916 aa). The mRNA cap 0-1 NS5-type MT domain maps to 2512–2776; the sequence is GGSEGDTLGD…ELDLGVGTRC (265 aa). Residue Ser-2567 participates in S-adenosyl-L-methionine binding. A Phosphoserine modification is found at Ser-2567. The For 2'-O-MTase activity role is filled by Lys-2572. The S-adenosyl-L-methionine site is built by Gly-2597, Trp-2598, Thr-2615, Ile-2616, Asp-2642, and Val-2643. The active-site For 2'-O-MTase activity is the Asp-2657. Ile-2658 lines the S-adenosyl-L-methionine pocket. Catalysis depends on for 2'-O-MTase activity residues Lys-2694 and Glu-2730. Residues 2730-2734 form an interaction with host SCRIB region; the sequence is EMYYS. Tyr-2732 lines the S-adenosyl-L-methionine pocket. Zn(2+) contacts are provided by Glu-2950, His-2954, Cys-2959, and Cys-2962. One can recognise a RdRp catalytic domain in the interval 3040 to 3189; the sequence is GLFYADDTAG…RPLDDRFGKA (150 aa). Zn(2+) is bound by residues His-3224, Cys-3240, and Cys-3359.

This sequence in the N-terminal section; belongs to the class I-like SAM-binding methyltransferase superfamily. mRNA cap 0-1 NS5-type methyltransferase family. In terms of assembly, homodimer. Interacts (via N-terminus) with host EXOC1 (via C-terminus); this interaction results in EXOC1 degradation through the proteasome degradation pathway. Forms heterodimers with envelope protein E in the endoplasmic reticulum and Golgi. As to quaternary structure, homodimer; in the endoplasmic reticulum and Golgi. Interacts with protein prM. Interacts with non-structural protein 1. In terms of assembly, homodimer; Homohexamer when secreted. Interacts with envelope protein E. Interacts (via N-terminus) with serine protease NS3. As to quaternary structure, forms a heterodimer with serine protease NS3. May form homooligomers. In terms of assembly, forms a heterodimer with NS2B. Interacts with NS4B. Interacts with unphosphorylated RNA-directed RNA polymerase NS5; this interaction stimulates RNA-directed RNA polymerase NS5 guanylyltransferase activity. Interacts with serine protease NS3. Interacts with NS1. As to quaternary structure, homodimer. Interacts with host STAT2; this interaction inhibits the phosphorylation of the latter, and, when all viral proteins are present (polyprotein), targets STAT2 for degradation. Interacts with serine protease NS3. Interacts with host SCRIB; this interaction targets NS5 to the cell membrane periphery and nucleus, thereby allowing efficient host nuclear STAT1 inhibition. Post-translationally, specific enzymatic cleavages in vivo yield mature proteins. Cleavages in the lumen of endoplasmic reticulum are performed by host signal peptidase, whereas cleavages in the cytoplasmic side are performed by serine protease NS3. Signal cleavage at the 2K-4B site requires a prior NS3 protease-mediated cleavage at the 4A-2K site. Cleaved in post-Golgi vesicles by a host furin, releasing the mature small envelope protein M, and peptide pr. This cleavage is incomplete as up to 30% of viral particles still carry uncleaved prM. In terms of processing, N-glycosylated. Post-translationally, N-glycosylated. The excreted form is glycosylated and this is required for efficient secretion of the protein from infected cells. Acetylated by host KAT5. Acetylation modulates NS3 RNA-binding and unwinding activities and plays an important positive role for viral replication. In terms of processing, phosphorylated on serines residues. This phosphorylation may trigger NS5 nuclear localization.

The protein localises to the virion. It is found in the host nucleus. Its subcellular location is the host cytoplasm. It localises to the host perinuclear region. The protein resides in the secreted. The protein localises to the virion membrane. It is found in the host endoplasmic reticulum membrane. It carries out the reaction Selective hydrolysis of -Xaa-Xaa-|-Yaa- bonds in which each of the Xaa can be either Arg or Lys and Yaa can be either Ser or Ala.. The enzyme catalyses RNA(n) + a ribonucleoside 5'-triphosphate = RNA(n+1) + diphosphate. It catalyses the reaction a ribonucleoside 5'-triphosphate + H2O = a ribonucleoside 5'-diphosphate + phosphate + H(+). The catalysed reaction is ATP + H2O = ADP + phosphate + H(+). It carries out the reaction a 5'-end (5'-triphosphoguanosine)-ribonucleoside in mRNA + S-adenosyl-L-methionine = a 5'-end (N(7)-methyl 5'-triphosphoguanosine)-ribonucleoside in mRNA + S-adenosyl-L-homocysteine. The enzyme catalyses a 5'-end (N(7)-methyl 5'-triphosphoguanosine)-ribonucleoside in mRNA + S-adenosyl-L-methionine = a 5'-end (N(7)-methyl 5'-triphosphoguanosine)-(2'-O-methyl-ribonucleoside) in mRNA + S-adenosyl-L-homocysteine + H(+). In terms of biological role, plays a role in virus budding by binding to the cell membrane and gathering the viral RNA into a nucleocapsid that forms the core of a mature virus particle. During virus entry, may induce genome penetration into the host cytoplasm after hemifusion induced by the surface proteins. Can migrate to the cell nucleus where it modulates host functions. Inhibits RNA silencing by interfering with host Dicer. Functionally, prevents premature fusion activity of envelope proteins in trans-Golgi by binding to envelope protein E at pH6.0. After virion release in extracellular space, gets dissociated from E dimers. Its function is as follows. Acts as a chaperone for envelope protein E during intracellular virion assembly by masking and inactivating envelope protein E fusion peptide. prM is the only viral peptide matured by host furin in the trans-Golgi network probably to avoid catastrophic activation of the viral fusion activity in acidic Golgi compartment prior to virion release. prM-E cleavage is inefficient, and many virions are only partially matured. These uncleaved prM would play a role in immune evasion. In terms of biological role, may play a role in virus budding. Exerts cytotoxic effects by activating a mitochondrial apoptotic pathway through M ectodomain. May display a viroporin activity. Binds to host cell surface receptor and mediates fusion between viral and cellular membranes. Envelope protein is synthesized in the endoplasmic reticulum in the form of heterodimer with protein prM. They play a role in virion budding in the ER, and the newly formed immature particle is covered with 60 spikes composed of heterodimer between precursor prM and envelope protein E. The virion is transported to the Golgi apparatus where the low pH causes dissociation of PrM-E heterodimers and formation of E homodimers. prM-E cleavage is inefficient, and many virions are only partially matured. These uncleaved prM would play a role in immune evasion. Functionally, involved in immune evasion, pathogenesis and viral replication. Once cleaved off the polyprotein, is targeted to three destinations: the viral replication cycle, the plasma membrane and the extracellular compartment. Essential for viral replication. Required for formation of the replication complex and recruitment of other non-structural proteins to the ER-derived membrane structures. Excreted as a hexameric lipoparticle that plays a role against host immune response. Antagonizing the complement function. Binds to the host macrophages and dendritic cells. Inhibits signal transduction originating from Toll-like receptor 3 (TLR3). Its function is as follows. Component of the viral RNA replication complex that functions in virion assembly and antagonizes the host immune response. In terms of biological role, required cofactor for the serine protease function of NS3. May have membrane-destabilizing activity and form viroporins. Displays three enzymatic activities: serine protease, NTPase and RNA helicase. NS3 serine protease, in association with NS2B, performs its autocleavage and cleaves the polyprotein at dibasic sites in the cytoplasm: C-prM, NS2A-NS2B, NS2B-NS3, NS3-NS4A, NS4A-2K and NS4B-NS5. NS3 RNA helicase binds RNA and unwinds dsRNA in the 3' to 5' direction. Functionally, regulates the ATPase activity of the NS3 helicase activity. NS4A allows NS3 helicase to conserve energy during unwinding. Its function is as follows. Functions as a signal peptide for NS4B and is required for the interferon antagonism activity of the latter. In terms of biological role, induces the formation of ER-derived membrane vesicles where the viral replication takes place. Inhibits interferon (IFN)-induced host STAT1 phosphorylation and nuclear translocation, thereby preventing the establishment of cellular antiviral state by blocking the IFN-alpha/beta pathway. Inhibits STAT2 translocation in the nucleus after IFN-alpha treatment. Replicates the viral (+) and (-) genome, and performs the capping of genomes in the cytoplasm. NS5 methylates viral RNA cap at guanine N-7 and ribose 2'-O positions. Besides its role in RNA genome replication, also prevents the establishment of cellular antiviral state by blocking the interferon-alpha/beta (IFN-alpha/beta) signaling pathway. Inhibits host TYK2 and STAT2 phosphorylation, thereby preventing activation of JAK-STAT signaling pathway. The sequence is that of Genome polyprotein from Tick-borne encephalitis virus European subtype (strain Neudoerfl) (NEUV).